The chain runs to 135 residues: Small ribosomal subunit protein uS12 (135 aa).

A disordered region spans residues 1 to 20 (MPTINQLVRKGRHSKVTKSK). Residues 9–18 (RKGRHSKVTK) are compositionally biased toward basic residues. Position 102 is a 3-methylthioaspartic acid (aspartate 102).

Belongs to the universal ribosomal protein uS12 family. In terms of assembly, part of the 30S ribosomal subunit. Contacts proteins S8 and S17. May interact with IF1 in the 30S initiation complex.

In terms of biological role, with S4 and S5 plays an important role in translational accuracy. Its function is as follows. Interacts with and stabilizes bases of the 16S rRNA that are involved in tRNA selection in the A site and with the mRNA backbone. Located at the interface of the 30S and 50S subunits, it traverses the body of the 30S subunit contacting proteins on the other side and probably holding the rRNA structure together. The combined cluster of proteins S8, S12 and S17 appears to hold together the shoulder and platform of the 30S subunit. This Lactobacillus helveticus (strain DPC 4571) protein is Small ribosomal subunit protein uS12.